The sequence spans 294 residues: MLGDLFTKPKKRKYATIPSDGTKADVPEGIMTKCPECKKIMYTKELQKNLMVCNYCGFHHPIGATARIDMLVDEGSFEELDANLTTANPLGFENYMDRIEKDKQKSGLNEAIVTGHATIDGNPLVIAVMDSRFRMASMGSVVGEKILRGVEEADKTNKPFVIFTASGGARMQEGMLSLMQMAKTSAAFKRFSNHGGLVITVMTHPTTGGVSASFASLGDYNFAEPGALIGFAGRRVIEQTVREELPEDFQTAEFLLKHGQLDDCISRLDLKNKLSFILKIHVKTPEAGGESDGE.

In terms of domain architecture, CoA carboxyltransferase N-terminal spans 30–294 (IMTKCPECKK…PEAGGESDGE (265 aa)). Zn(2+)-binding residues include Cys34, Cys37, Cys53, and Cys56. The C4-type zinc finger occupies 34-56 (CPECKKIMYTKELQKNLMVCNYC).

It belongs to the AccD/PCCB family. As to quaternary structure, acetyl-CoA carboxylase is a heterohexamer composed of biotin carboxyl carrier protein (AccB), biotin carboxylase (AccC) and two subunits each of ACCase subunit alpha (AccA) and ACCase subunit beta (AccD). Zn(2+) is required as a cofactor.

Its subcellular location is the cytoplasm. It catalyses the reaction N(6)-carboxybiotinyl-L-lysyl-[protein] + acetyl-CoA = N(6)-biotinyl-L-lysyl-[protein] + malonyl-CoA. It participates in lipid metabolism; malonyl-CoA biosynthesis; malonyl-CoA from acetyl-CoA: step 1/1. Component of the acetyl coenzyme A carboxylase (ACC) complex. Biotin carboxylase (BC) catalyzes the carboxylation of biotin on its carrier protein (BCCP) and then the CO(2) group is transferred by the transcarboxylase to acetyl-CoA to form malonyl-CoA. This chain is Acetyl-coenzyme A carboxylase carboxyl transferase subunit beta, found in Listeria innocua serovar 6a (strain ATCC BAA-680 / CLIP 11262).